Consider the following 210-residue polypeptide: Na(+)-translocating NADH-quinone reductase subunit D (210 aa).

6 helical membrane-spanning segments follow: residues 9 to 29 (SVLI…LGVC), 42 to 62 (LVMT…ISLI), 72 to 92 (IIVQ…VLQA), 103 to 123 (VFVG…AFAM), 131 to 151 (FMDG…VGFV), and 178 to 198 (NGLL…IWII).

The protein belongs to the NqrDE/RnfAE family. In terms of assembly, composed of six subunits; NqrA, NqrB, NqrC, NqrD, NqrE and NqrF.

It localises to the cell inner membrane. It carries out the reaction a ubiquinone + n Na(+)(in) + NADH + H(+) = a ubiquinol + n Na(+)(out) + NAD(+). NQR complex catalyzes the reduction of ubiquinone-1 to ubiquinol by two successive reactions, coupled with the transport of Na(+) ions from the cytoplasm to the periplasm. NqrA to NqrE are probably involved in the second step, the conversion of ubisemiquinone to ubiquinol. The sequence is that of Na(+)-translocating NADH-quinone reductase subunit D from Shewanella piezotolerans (strain WP3 / JCM 13877).